Reading from the N-terminus, the 508-residue chain is Cobalamin biosynthesis protein CobIJ (508 aa).

Residues 1-243 (MSARGTLWGV…AMLPGGRRRA (243 aa)) form a precorrin-2 C20-methyltransferase region. The segment at 244–508 (LLTGTVAVVG…TATKSSRHSD (265 aa)) is precorrin-3 methylase. The segment at 489–508 (PRRYPEAGRATATKSSRHSD) is disordered.

The protein belongs to the precorrin methyltransferase family.

The catalysed reaction is precorrin-2 + S-adenosyl-L-methionine = precorrin-3A + S-adenosyl-L-homocysteine + H(+). The enzyme catalyses precorrin-3B + S-adenosyl-L-methionine = precorrin-4 + S-adenosyl-L-homocysteine + 3 H(+). The protein operates within cofactor biosynthesis; adenosylcobalamin biosynthesis; cob(II)yrinate a,c-diamide from precorrin-2 (aerobic route): step 1/10. It functions in the pathway cofactor biosynthesis; adenosylcobalamin biosynthesis; cob(II)yrinate a,c-diamide from precorrin-2 (aerobic route): step 3/10. Methylates precorrin-2 at the C-20 position to produce precorrin-3A. The chain is Cobalamin biosynthesis protein CobIJ (cobIJ) from Mycobacterium bovis (strain ATCC BAA-935 / AF2122/97).